A 579-amino-acid polypeptide reads, in one-letter code: Proline--tRNA ligase (579 aa).

This sequence belongs to the class-II aminoacyl-tRNA synthetase family. ProS type 1 subfamily. Homodimer.

It is found in the cytoplasm. The catalysed reaction is tRNA(Pro) + L-proline + ATP = L-prolyl-tRNA(Pro) + AMP + diphosphate. Its function is as follows. Catalyzes the attachment of proline to tRNA(Pro) in a two-step reaction: proline is first activated by ATP to form Pro-AMP and then transferred to the acceptor end of tRNA(Pro). As ProRS can inadvertently accommodate and process non-cognate amino acids such as alanine and cysteine, to avoid such errors it has two additional distinct editing activities against alanine. One activity is designated as 'pretransfer' editing and involves the tRNA(Pro)-independent hydrolysis of activated Ala-AMP. The other activity is designated 'posttransfer' editing and involves deacylation of mischarged Ala-tRNA(Pro). The misacylated Cys-tRNA(Pro) is not edited by ProRS. The polypeptide is Proline--tRNA ligase (Hamiltonella defensa subsp. Acyrthosiphon pisum (strain 5AT)).